The sequence spans 436 residues: MMHYDVAVIGGGIAGYSAALRALQAGKKVVLINQGQSALHFSSGSIDVLGRLPDGSVVNQPFDALSALQQQVPEHPYSKVGRKNSEKGLMWFKRTLDSAHVPLHHEPDGANHWRITPLGTLKNTWLSQPFVYPYRGNADFSRIMIVAIDGYRDFQPAMLRDNLAQRPELANTPMLTVNVSIPGFEGFRRNPNELRSIDIARLLRQESAWNALCDQLMRVARPDDLVIMPAIMGNGDGLHLMSKLQQVTQLRFHEVPTMPPSLLGIRIEEALHRSFIQGGGVQLKGDKVIDGDFAGSRLTAIHTQNLRDFPISAEHYVMATGSYFSQGLQASQHAIQEPTFALDVQQNPDRAQWRHAQFIAAQSHPFMTFGVTTDANLHPSRQGKTIDNLWCCGAMLSGYDPVFEGCGGGVAIATAYHAVEQILATYAQTKQPEVLL.

It belongs to the anaerobic G-3-P dehydrogenase subunit B family. As to quaternary structure, composed of a catalytic GlpA/B dimer and of membrane bound GlpC. FMN is required as a cofactor.

The enzyme catalyses a quinone + sn-glycerol 3-phosphate = dihydroxyacetone phosphate + a quinol. It participates in polyol metabolism; glycerol degradation via glycerol kinase pathway; glycerone phosphate from sn-glycerol 3-phosphate (anaerobic route): step 1/1. Functionally, conversion of glycerol 3-phosphate to dihydroxyacetone. Uses fumarate or nitrate as electron acceptor. In Vibrio cholerae serotype O1 (strain M66-2), this protein is Anaerobic glycerol-3-phosphate dehydrogenase subunit B.